A 360-amino-acid chain; its full sequence is S-adenosylmethionine:tRNA ribosyltransferase-isomerase (360 aa).

The protein belongs to the QueA family. Monomer.

It localises to the cytoplasm. It carries out the reaction 7-aminomethyl-7-carbaguanosine(34) in tRNA + S-adenosyl-L-methionine = epoxyqueuosine(34) in tRNA + adenine + L-methionine + 2 H(+). It participates in tRNA modification; tRNA-queuosine biosynthesis. Functionally, transfers and isomerizes the ribose moiety from AdoMet to the 7-aminomethyl group of 7-deazaguanine (preQ1-tRNA) to give epoxyqueuosine (oQ-tRNA). The sequence is that of S-adenosylmethionine:tRNA ribosyltransferase-isomerase from Burkholderia mallei (strain NCTC 10247).